A 536-amino-acid polypeptide reads, in one-letter code: CTP synthase (536 aa).

The amidoligase domain stretch occupies residues methionine 1–leucine 267. Serine 13 lines the CTP pocket. Residue serine 13 coordinates UTP. Serine 14 to isoleucine 19 serves as a coordination point for ATP. L-glutamine is bound at residue tyrosine 54. Aspartate 71 provides a ligand contact to ATP. Positions 71 and 141 each coordinate Mg(2+). Residues aspartate 148 to glutamate 150, lysine 188 to glutamine 193, and lysine 224 each bind CTP. Residues lysine 188–glutamine 193 and lysine 224 contribute to the UTP site. Arginine 240–alanine 242 contacts ATP. The Glutamine amidotransferase type-1 domain maps to threonine 293–asparagine 535. Position 355 (glycine 355) interacts with L-glutamine. Residue cysteine 382 is the Nucleophile; for glutamine hydrolysis of the active site. L-glutamine contacts are provided by residues leucine 383–glutamine 386, glutamate 406, and arginine 463. Active-site residues include histidine 508 and glutamate 510.

This sequence belongs to the CTP synthase family. Homotetramer.

It carries out the reaction UTP + L-glutamine + ATP + H2O = CTP + L-glutamate + ADP + phosphate + 2 H(+). The enzyme catalyses L-glutamine + H2O = L-glutamate + NH4(+). It catalyses the reaction UTP + NH4(+) + ATP = CTP + ADP + phosphate + 2 H(+). The protein operates within pyrimidine metabolism; CTP biosynthesis via de novo pathway; CTP from UDP: step 2/2. Allosterically activated by GTP, when glutamine is the substrate; GTP has no effect on the reaction when ammonia is the substrate. The allosteric effector GTP functions by stabilizing the protein conformation that binds the tetrahedral intermediate(s) formed during glutamine hydrolysis. Inhibited by the product CTP, via allosteric rather than competitive inhibition. Functionally, catalyzes the ATP-dependent amination of UTP to CTP with either L-glutamine or ammonia as the source of nitrogen. Regulates intracellular CTP levels through interactions with the four ribonucleotide triphosphates. In Staphylococcus aureus (strain NCTC 8325 / PS 47), this protein is CTP synthase.